Reading from the N-terminus, the 199-residue chain is Protein Maeo_0138 (199 aa).

Positions 7 to 197 (EEGKFAVKFA…ELSPNGKIVE (191 aa)) constitute an AMMECR1 domain.

The protein is Protein Maeo_0138 of Methanococcus aeolicus (strain ATCC BAA-1280 / DSM 17508 / OCM 812 / Nankai-3).